Reading from the N-terminus, the 555-residue chain is MAHLSDLDIANQSELKPIGEIAEKAGIPADALEQYGHYKAKIDINQIKPKDNKGKVVLVTAMSPTPAGEGKSTVTVGLSDAFNELKKNVMVALREPALGPTFGIKGGATGGGYAQVLPMEDINLHFNGDFHAITTANNALSAFIDNHIHQGNELGIDVRRVEWKRVLDMNDRALRHVNVGLGGPTNGVPREDGFNITVASEVMAILCLARNINDLKEKISRITIGYTRDRKPVTVADLKVEGALAMILKDAIKPNLVQTIEGTPALVHGGPFANIAHGCNSILATETARDLADIVVTEAGFGSDLGAEKFIDIKAREAGFEPSAVVLVATVRALKMHGGVAKDDLKEENVEAVKAGIVNLERHVNNIRKFGVEPVIALNAFIHDTDAETEAVKAWAKENNVRIALTEVWEKGGKGGVELANQVLEVIEQPNDFKFLYDLDQSLEEKIETIVKDIYGGSSVTFSKKAKKQLKEFTDNGWGQYPICMAKTQYSFSDDATALGAPTDFDITIRELEAKTGAGFIVALTGAIMTMPGLPKKPAALNMDVTEDGHAVGLF.

65–72 (TPAGEGKS) provides a ligand contact to ATP.

The protein belongs to the formate--tetrahydrofolate ligase family.

It carries out the reaction (6S)-5,6,7,8-tetrahydrofolate + formate + ATP = (6R)-10-formyltetrahydrofolate + ADP + phosphate. It participates in one-carbon metabolism; tetrahydrofolate interconversion. The chain is Formate--tetrahydrofolate ligase from Staphylococcus haemolyticus (strain JCSC1435).